Here is an 86-residue protein sequence, read N- to C-terminus: Class II hydrophobin 2 (86 aa).

The N-terminal stretch at 1-15 (MQFFAVALFATSALA) is a signal peptide. Intrachain disulfides connect Cys-18–Cys-67, Cys-28–Cys-58, Cys-29–Cys-41, and Cys-68–Cys-79.

The protein belongs to the cerato-ulmin hydrophobin family. As to quaternary structure, homodimer. Homodimers further self-assemble to form highly ordered films at water-air interfaces through intermolecular interactions.

The protein resides in the secreted. It localises to the spore wall. It is found in the cell wall. Its function is as follows. Aerial growth, conidiation, and dispersal of filamentous fungi in the environment rely upon a capability of their secreting small amphipathic proteins called hydrophobins (HPBs) with low sequence identity. Class I can self-assemble into an outermost layer of rodlet bundles on aerial cell surfaces, conferring cellular hydrophobicity that supports fungal growth, development and dispersal; whereas Class II form highly ordered films at water-air interfaces through intermolecular interactions but contribute nothing to the rodlet structure. Hbf2 is a class II hydrophobin that is involved in sporuration. This is Class II hydrophobin 2 from Hypocrea jecorina (Trichoderma reesei).